Here is a 364-residue protein sequence, read N- to C-terminus: N-acetyl-gamma-glutamyl-phosphate reductase (364 aa).

C157 is an active-site residue.

The protein belongs to the NAGSA dehydrogenase family. Type 1 subfamily.

Its subcellular location is the cytoplasm. It carries out the reaction N-acetyl-L-glutamate 5-semialdehyde + phosphate + NADP(+) = N-acetyl-L-glutamyl 5-phosphate + NADPH + H(+). Its pathway is amino-acid biosynthesis; L-arginine biosynthesis; N(2)-acetyl-L-ornithine from L-glutamate: step 3/4. In terms of biological role, catalyzes the NADPH-dependent reduction of N-acetyl-5-glutamyl phosphate to yield N-acetyl-L-glutamate 5-semialdehyde. This chain is N-acetyl-gamma-glutamyl-phosphate reductase, found in Bifidobacterium longum (strain NCC 2705).